The sequence spans 132 residues: Phosphomevalonate dehydratase small subunit (132 aa).

Catalysis depends on S58, which acts as the Proton acceptor.

It belongs to the AcnX type II small subunit family. As to quaternary structure, heterodimer composed of a large subunit (PMDh-L) and a small subunit (PMDh-S).

The enzyme catalyses (R)-5-phosphomevalonate = (2E)-3-methyl-5-phosphooxypent-2-enoate + H2O. It functions in the pathway isoprenoid biosynthesis; isopentenyl diphosphate biosynthesis via mevalonate pathway. With respect to regulation, neither the addition of 1 mM Mg(2+) nor 1 mM Mn(2+) has a significant effect on the activity, whereas Zn(2+) causes almost complete inactivation. Strongly inhibited by H(2)O(2), but not by EDTA or iodoacetamide. Its function is as follows. Component of a hydro-lyase that catalyzes the dehydration of mevalonate 5-phosphate (MVA5P) to form trans-anhydromevalonate 5-phosphate (tAHMP). Involved in the archaeal mevalonate (MVA) pathway, which provides fundamental precursors for isoprenoid biosynthesis, such as isopentenyl diphosphate (IPP) and dimethylallyl diphosphate (DMAPP). In Aeropyrum pernix (strain ATCC 700893 / DSM 11879 / JCM 9820 / NBRC 100138 / K1), this protein is Phosphomevalonate dehydratase small subunit.